Consider the following 282-residue polypeptide: ESX-1 secretion-associated protein EspG1 (282 aa).

The protein belongs to the EspG family. In terms of assembly, interacts specifically with ESX-1-dependent PE/PPE proteins.

It localises to the cytoplasm. Part of the ESX-1 / type VII specialized secretion system (T7SS), which exports several proteins including EsxA and EsxB. Specific chaperone for cognate PE/PPE proteins, plays an important role in preventing aggregation of PE/PPE dimers. Also plays a role in DNA conjugation, in at least recipient strain. The sequence is that of ESX-1 secretion-associated protein EspG1 from Mycolicibacterium smegmatis (strain ATCC 700084 / mc(2)155) (Mycobacterium smegmatis).